A 131-amino-acid polypeptide reads, in one-letter code: Glycine cleavage system H protein (131 aa).

In terms of domain architecture, Lipoyl-binding spans 24-106 (TVRVGITDYA…YGEGWLVELQ (83 aa)). Lys-65 is subject to N6-lipoyllysine.

It belongs to the GcvH family. As to quaternary structure, the glycine cleavage system is composed of four proteins: P, T, L and H. Requires (R)-lipoate as cofactor.

Its function is as follows. The glycine cleavage system catalyzes the degradation of glycine. The H protein shuttles the methylamine group of glycine from the P protein to the T protein. This chain is Glycine cleavage system H protein, found in Mycolicibacterium gilvum (strain PYR-GCK) (Mycobacterium gilvum (strain PYR-GCK)).